We begin with the raw amino-acid sequence, 149 residues long: Nucleoside diphosphate kinase (149 aa).

K9, F57, R85, T91, R102, and N112 together coordinate ATP. H115 functions as the Pros-phosphohistidine intermediate in the catalytic mechanism.

It belongs to the NDK family. Homotetramer. Mg(2+) serves as cofactor.

It localises to the cytoplasm. It catalyses the reaction dZDP + ATP = dZTP + ADP. The enzyme catalyses a 2'-deoxyribonucleoside 5'-diphosphate + ATP = a 2'-deoxyribonucleoside 5'-triphosphate + ADP. It carries out the reaction a ribonucleoside 5'-diphosphate + ATP = a ribonucleoside 5'-triphosphate + ADP. It functions in the pathway purine metabolism. Major role in the synthesis of nucleoside triphosphates other than ATP. The ATP gamma phosphate is transferred to the NDP beta phosphate via a ping-pong mechanism, using a phosphorylated active-site intermediate. Its function is as follows. (Microbial infection) Catalyzes the phosphorylation of dZDP to dZTP, when the bacterium is infected by a phage that produces the substrate for the synthesis of dZTP (2- amino-2'-deoxyadenosine 5'-triphosphate), which is then used by the phage as a DNA polymerase substrate. The sequence is that of Nucleoside diphosphate kinase from Synechococcus sp. (strain JA-3-3Ab) (Cyanobacteria bacterium Yellowstone A-Prime).